Consider the following 213-residue polypeptide: NADH-quinone oxidoreductase subunit C (213 aa).

Belongs to the complex I 30 kDa subunit family. In terms of assembly, NDH-1 is composed of 15 different subunits. Subunits NuoB, C, D, E, F, and G constitute the peripheral sector of the complex.

Its subcellular location is the cell membrane. The enzyme catalyses a quinone + NADH + 5 H(+)(in) = a quinol + NAD(+) + 4 H(+)(out). In terms of biological role, NDH-1 shuttles electrons from NADH, via FMN and iron-sulfur (Fe-S) centers, to quinones in the respiratory chain. The immediate electron acceptor for the enzyme in this species is believed to be a menaquinone. Couples the redox reaction to proton translocation (for every two electrons transferred, four hydrogen ions are translocated across the cytoplasmic membrane), and thus conserves the redox energy in a proton gradient. The polypeptide is NADH-quinone oxidoreductase subunit C (Deinococcus geothermalis (strain DSM 11300 / CIP 105573 / AG-3a)).